A 108-amino-acid chain; its full sequence is UPF0060 membrane protein SAB2216c (108 aa).

4 helical membrane passes run 5-25 (IFIF…IWLW), 31-51 (CSLV…IATF), 60-80 (VYAA…MVVD), and 86-106 (KYDV…LLPS).

Belongs to the UPF0060 family.

It is found in the cell membrane. In Staphylococcus aureus (strain bovine RF122 / ET3-1), this protein is UPF0060 membrane protein SAB2216c.